The chain runs to 209 residues: Large ribosomal subunit protein uL3 (209 aa).

Gln-150 is modified (N5-methylglutamine).

Belongs to the universal ribosomal protein uL3 family. In terms of assembly, part of the 50S ribosomal subunit. Forms a cluster with proteins L14 and L19. Post-translationally, methylated by PrmB.

Functionally, one of the primary rRNA binding proteins, it binds directly near the 3'-end of the 23S rRNA, where it nucleates assembly of the 50S subunit. The sequence is that of Large ribosomal subunit protein uL3 from Aliivibrio salmonicida (strain LFI1238) (Vibrio salmonicida (strain LFI1238)).